Here is a 517-residue protein sequence, read N- to C-terminus: Acetylcholine receptor subunit gamma (517 aa).

Positions 1–22 (MHGGQGPLLLLLLLAVCLGAQG) are cleaved as a signal peptide. At 23-240 (RNQEERLLAD…VVFYLLIQRK (218 aa)) the chain is on the extracellular side. N-linked (GlcNAc...) asparagine glycans are attached at residues asparagine 52 and asparagine 163. Cysteines 150 and 164 form a disulfide. The next 3 helical transmembrane spans lie at 241 to 265 (PLFY…IHFL), 275 to 293 (TVAI…LVAK), and 309 to 330 (LTFL…LNVS). Residues 331 to 474 (LRSPHTHSMA…WFLVGRVLDR (144 aa)) are Cytoplasmic-facing. The chain crosses the membrane as a helical span at residues 475 to 495 (VCFLAMLSLFICGTAGIFLMA).

It belongs to the ligand-gated ion channel (TC 1.A.9) family. Acetylcholine receptor (TC 1.A.9.1) subfamily. Gamma/CHRNG sub-subfamily. As to quaternary structure, pentamer of two alpha chains, and one each of the beta, delta, and gamma (in immature muscle) or epsilon (in mature muscle) chains.

The protein localises to the postsynaptic cell membrane. The protein resides in the cell membrane. The enzyme catalyses K(+)(in) = K(+)(out). The catalysed reaction is Na(+)(in) = Na(+)(out). In terms of biological role, after binding acetylcholine, the AChR responds by an extensive change in conformation that affects all subunits and leads to opening of an ion-conducting channel across the plasma membrane. The polypeptide is Acetylcholine receptor subunit gamma (Homo sapiens (Human)).